We begin with the raw amino-acid sequence, 250 residues long: 3-deoxy-manno-octulosonate cytidylyltransferase (250 aa).

This sequence belongs to the KdsB family.

The protein localises to the cytoplasm. The catalysed reaction is 3-deoxy-alpha-D-manno-oct-2-ulosonate + CTP = CMP-3-deoxy-beta-D-manno-octulosonate + diphosphate. It participates in nucleotide-sugar biosynthesis; CMP-3-deoxy-D-manno-octulosonate biosynthesis; CMP-3-deoxy-D-manno-octulosonate from 3-deoxy-D-manno-octulosonate and CTP: step 1/1. Its pathway is bacterial outer membrane biogenesis; lipopolysaccharide biosynthesis. Functionally, activates KDO (a required 8-carbon sugar) for incorporation into bacterial lipopolysaccharide in Gram-negative bacteria. The protein is 3-deoxy-manno-octulosonate cytidylyltransferase of Janthinobacterium sp. (strain Marseille) (Minibacterium massiliensis).